The sequence spans 184 residues: MADEQLDEKNLNSEEAGAVNGDARVQELEEQLAAAKDQSLRAAADLQNIRRRAEQDVEKAHKFALEKFAGDLLPIIDSLERGLELSNADDDTIKPMREGIELTLKMFHDTLKRYNLEALEPHGEPFNAEHHQAMAMQESADVEPNSVLKVFQKGYLLNGRLLRPAMVVVSKSPAPAQPSIDEKA.

Positions 1–24 are disordered; that stretch reads MADEQLDEKNLNSEEAGAVNGDAR.

It belongs to the GrpE family. Homodimer.

It is found in the cytoplasm. Participates actively in the response to hyperosmotic and heat shock by preventing the aggregation of stress-denatured proteins, in association with DnaK and GrpE. It is the nucleotide exchange factor for DnaK and may function as a thermosensor. Unfolded proteins bind initially to DnaJ; upon interaction with the DnaJ-bound protein, DnaK hydrolyzes its bound ATP, resulting in the formation of a stable complex. GrpE releases ADP from DnaK; ATP binding to DnaK triggers the release of the substrate protein, thus completing the reaction cycle. Several rounds of ATP-dependent interactions between DnaJ, DnaK and GrpE are required for fully efficient folding. In Pseudomonas entomophila (strain L48), this protein is Protein GrpE.